We begin with the raw amino-acid sequence, 382 residues long: N-acetyldiaminopimelate deacetylase (382 aa).

The active site involves Asp73. Glu132 serves as the catalytic Proton acceptor.

The protein belongs to the peptidase M20A family. N-acetyldiaminopimelate deacetylase subfamily.

It catalyses the reaction N-acetyl-(2S,6S)-2,6-diaminopimelate + H2O = (2S,6S)-2,6-diaminopimelate + acetate. It participates in amino-acid biosynthesis; L-lysine biosynthesis via DAP pathway; LL-2,6-diaminopimelate from (S)-tetrahydrodipicolinate (acetylase route): step 3/3. Catalyzes the conversion of N-acetyl-diaminopimelate to diaminopimelate and acetate. The protein is N-acetyldiaminopimelate deacetylase of Oenococcus oeni (strain ATCC BAA-331 / PSU-1).